The sequence spans 228 residues: Putative lipoprotein LprH (228 aa).

The N-terminal stretch at 1–27 (MACLGRPGCRGWAGASLVLVVVLALAA) is a signal peptide. Cysteine 28 carries the N-palmitoyl cysteine lipid modification. Cysteine 28 carries the S-diacylglycerol cysteine lipid modification. The chain crosses the membrane as a helical span at residues 191-211 (GLAVVPHAVLVLSACGFKPGF).

The protein resides in the cell membrane. The protein is Putative lipoprotein LprH (lprH) of Mycobacterium bovis (strain ATCC BAA-935 / AF2122/97).